Reading from the N-terminus, the 401-residue chain is Imidazolonepropionase (401 aa).

Residues His70 and His72 each coordinate Fe(3+). The Zn(2+) site is built by His70 and His72. Arg79, Tyr142, and His175 together coordinate 4-imidazolone-5-propanoate. Tyr142 lines the N-formimidoyl-L-glutamate pocket. A Fe(3+)-binding site is contributed by His238. His238 contacts Zn(2+). A 4-imidazolone-5-propanoate-binding site is contributed by Gln241. Asp313 contributes to the Fe(3+) binding site. Zn(2+) is bound at residue Asp313. Residues Asn315 and Gly317 each contribute to the N-formimidoyl-L-glutamate site. A 4-imidazolone-5-propanoate-binding site is contributed by Thr318.

This sequence belongs to the metallo-dependent hydrolases superfamily. HutI family. Zn(2+) serves as cofactor. The cofactor is Fe(3+).

It is found in the cytoplasm. It carries out the reaction 4-imidazolone-5-propanoate + H2O = N-formimidoyl-L-glutamate. It participates in amino-acid degradation; L-histidine degradation into L-glutamate; N-formimidoyl-L-glutamate from L-histidine: step 3/3. Functionally, catalyzes the hydrolytic cleavage of the carbon-nitrogen bond in imidazolone-5-propanoate to yield N-formimidoyl-L-glutamate. It is the third step in the universal histidine degradation pathway. This is Imidazolonepropionase from Xanthomonas euvesicatoria pv. vesicatoria (strain 85-10) (Xanthomonas campestris pv. vesicatoria).